The following is a 201-amino-acid chain: Single-stranded DNA-binding protein DdrA (201 aa).

Belongs to the RAD52 family. The truncated form (1-160) of DdrA forms heptameric rings that can assemble into a 3-ring structure.

Its function is as follows. ssDNA-binding protein that contributes to the ionizing radiation resistance of D.deserti. Plays a role in DNA repair and genome reconstitution, in a RecA-independent process, since DdrA is essential for recovery from severe genomic fragmentation as a result of exposure to severe levels of ionizing radiation in an environment lacking nutrients. In vitro, binds to the 3'-ends of single-stranded DNA, and probably protects them from nuclease degradation. Thus, DdrA is part of a DNA end-protection system that helps to preserve genome integrity following irradiation or desiccation. This is Single-stranded DNA-binding protein DdrA (ddrA) from Deinococcus deserti (strain DSM 17065 / CIP 109153 / LMG 22923 / VCD115).